A 231-amino-acid polypeptide reads, in one-letter code: Ribonuclease 3 (231 aa).

In terms of domain architecture, RNase III spans 5-134 (QKGIKEDFGI…FIGALYKDQG (130 aa)). Glutamate 47 serves as a coordination point for Mg(2+). The active site involves aspartate 51. Residues aspartate 120 and glutamate 123 each contribute to the Mg(2+) site. Residue glutamate 123 is part of the active site. Residues 160–230 (DYKSKLQELL…AKKAYQDVTP (71 aa)) enclose the DRBM domain.

Belongs to the ribonuclease III family. Homodimer. It depends on Mg(2+) as a cofactor.

Its subcellular location is the cytoplasm. It carries out the reaction Endonucleolytic cleavage to 5'-phosphomonoester.. Its function is as follows. Digests double-stranded RNA. Involved in the processing of primary rRNA transcript to yield the immediate precursors to the large and small rRNAs (23S and 16S). Processes some mRNAs, and tRNAs when they are encoded in the rRNA operon. Processes pre-crRNA and tracrRNA of type II CRISPR loci if present in the organism. The protein is Ribonuclease 3 of Oenococcus oeni (strain ATCC BAA-331 / PSU-1).